Consider the following 680-residue polypeptide: Enzymatic polyprotein (680 aa).

The interval 41 to 131 (LHCFVDTGAS…LYEPFIQFTD (91 aa)) is protease. The active site involves aspartate 46. One can recognise a Reverse transcriptase domain in the interval 273 to 453 (LKVIKPSKSP…KKINFLGLEI (181 aa)).

It belongs to the caulimoviridae enzymatic polyprotein family.

It catalyses the reaction DNA(n) + a 2'-deoxyribonucleoside 5'-triphosphate = DNA(n+1) + diphosphate. Functionally, encodes for at least two polypeptides: protease (PR) and reverse transcriptase (RT). The protease processes the polyprotein in cis. Reverse transcriptase is multifunctional enzyme that converts the viral RNA genome into dsDNA in viral cytoplasmic capsids. This enzyme displays a DNA polymerase activity that can copy either DNA or RNA templates, and a ribonuclease H (RNase H) activity that cleaves the RNA strand of RNA-DNA heteroduplexes in a partially processive 3'- to 5'-endonucleasic mode. Neo-synthesized pregenomic RNA (pgRNA) are encapsidated, and reverse-transcribed inside the nucleocapsid. Partial (+)DNA is synthesized from the (-)DNA template and generates the relaxed circular DNA (RC-DNA) genome. After budding and infection, the RC-DNA migrates in the nucleus, and is converted into a plasmid-like covalently closed circular DNA (cccDNA). The protein is Enzymatic polyprotein of Cauliflower mosaic virus (strain NY8153) (CaMV).